Reading from the N-terminus, the 544-residue chain is Chaperonin GroEL (544 aa).

ATP-binding positions include 30–33 (TLGP), Lys51, 87–91 (DGTTT), Gly415, and Asp495.

The protein belongs to the chaperonin (HSP60) family. As to quaternary structure, forms a cylinder of 14 subunits composed of two heptameric rings stacked back-to-back. Interacts with the co-chaperonin GroES.

Its subcellular location is the cytoplasm. The enzyme catalyses ATP + H2O + a folded polypeptide = ADP + phosphate + an unfolded polypeptide.. Functionally, together with its co-chaperonin GroES, plays an essential role in assisting protein folding. The GroEL-GroES system forms a nano-cage that allows encapsulation of the non-native substrate proteins and provides a physical environment optimized to promote and accelerate protein folding. This chain is Chaperonin GroEL, found in Methylobacillus flagellatus (strain ATCC 51484 / DSM 6875 / VKM B-1610 / KT).